The following is a 142-amino-acid chain: Hemoglobin subunit alpha (142 aa).

The 141-residue stretch at 2 to 142 folds into the Globin domain; that stretch reads VLSPADKTNV…VSTVLTSKYR (141 aa). Ser4 carries the phosphoserine modification. Lys8 is modified (N6-succinyllysine). At Thr9 the chain carries Phosphothreonine. N6-succinyllysine is present on Lys12. Lys17 carries the N6-acetyllysine; alternate modification. Lys17 is modified (N6-succinyllysine; alternate). Tyr25 carries the post-translational modification Phosphotyrosine. Phosphoserine is present on Ser36. Lys41 carries the post-translational modification N6-succinyllysine. The residue at position 50 (Ser50) is a Phosphoserine. Residue His59 coordinates O2. Residue His88 participates in heme b binding. Ser103 is modified (phosphoserine). The residue at position 109 (Thr109) is a Phosphothreonine. The residue at position 125 (Ser125) is a Phosphoserine. Phosphothreonine occurs at positions 135 and 138. A Phosphoserine modification is found at Ser139.

It belongs to the globin family. Heterotetramer of two alpha chains and two beta chains. As to expression, red blood cells.

Functionally, involved in oxygen transport from the lung to the various peripheral tissues. Its function is as follows. Hemopressin acts as an antagonist peptide of the cannabinoid receptor CNR1. Hemopressin-binding efficiently blocks cannabinoid receptor CNR1 and subsequent signaling. The chain is Hemoglobin subunit alpha (HBA) from Ailuropoda melanoleuca (Giant panda).